Here is a 222-residue protein sequence, read N- to C-terminus: Cytochrome b6 (222 aa).

Residues 39-59 (IFYCLGGITLVCFLIQFATGF) form a helical membrane-spanning segment. Position 42 (Cys-42) interacts with heme c. Residues His-93 and His-107 each coordinate heme b. A run of 3 helical transmembrane segments spans residues 97 to 117 (ASMMVLMMILHTFRVYLTGGF), 123 to 143 (LTWVTGVVMAVITVSFGVTGY), and 193 to 213 (LHTFVLPWFIAVFMLLHFLMI). Residues His-194 and His-209 each contribute to the heme b site.

This sequence belongs to the cytochrome b family. PetB subfamily. The 4 large subunits of the cytochrome b6-f complex are cytochrome b6, subunit IV (17 kDa polypeptide, PetD), cytochrome f and the Rieske protein, while the 4 small subunits are PetG, PetL, PetM and PetN. The complex functions as a dimer. The cofactor is heme b. Heme c is required as a cofactor.

It is found in the cellular thylakoid membrane. Component of the cytochrome b6-f complex, which mediates electron transfer between photosystem II (PSII) and photosystem I (PSI), cyclic electron flow around PSI, and state transitions. This Trichodesmium erythraeum (strain IMS101) protein is Cytochrome b6.